Here is a 483-residue protein sequence, read N- to C-terminus: Rhamnulokinase (483 aa).

A11 to R15 lines the ATP pocket. Substrate-binding positions include G79 and H234–T236. The active-site Proton acceptor is the D235. T257 is a binding site for ATP. Position 294 (N294) interacts with substrate. Q302 contacts ATP. The cysteines at positions 352 and 369 are disulfide-linked. G401 lines the ATP pocket.

Belongs to the rhamnulokinase family. It depends on Mg(2+) as a cofactor.

The catalysed reaction is L-rhamnulose + ATP = L-rhamnulose 1-phosphate + ADP + H(+). It participates in carbohydrate degradation; L-rhamnose degradation; glycerone phosphate from L-rhamnose: step 2/3. Involved in the catabolism of L-rhamnose (6-deoxy-L-mannose). Catalyzes the transfer of the gamma-phosphate group from ATP to the 1-hydroxyl group of L-rhamnulose to yield L-rhamnulose 1-phosphate. This chain is Rhamnulokinase, found in Listeria monocytogenes serotype 4b (strain F2365).